We begin with the raw amino-acid sequence, 421 residues long: MRILILGSGVVGTASAYYLAKAGHEVTVLDRQRAAGMETSFANAGQVSPGYSAPWAGPGIPVKAIKWLLMHHRPLVVWPSLDPKLYLWLAKMLANCTEEAYRRNKARMVALAEYSRDALDALRSETGIAYDERMLGTLQLFRTRKQLDHVHSDTEVLDAHNVRYELLDPSGCIRAEPALARVRDKFVGGLRLPGDETGDAHIFTRNLADICARQGVTFRYGVTVEGLRHEAGRITGVALAGGEIATADIYVAAMGSYTPALLAPLGIRLPVYPVKGYSLTLPITDPDAAPRSTVMDETYKVAITRLGERIRVGGTAELAGFDLSLREPRRATLAHSVGDLFPAGGDISKATFWTGLRPMTPDGTPIIGPTKLDNLFTNTGHGTLGWTMACGSGRVLADLIGGRAPDIDTADLSVARYAEAA.

3 to 17 contributes to the FAD binding site; sequence ILILGSGVVGTASAY.

Belongs to the DadA oxidoreductase family. FAD serves as cofactor.

The catalysed reaction is a D-alpha-amino acid + A + H2O = a 2-oxocarboxylate + AH2 + NH4(+). It participates in amino-acid degradation; D-alanine degradation; NH(3) and pyruvate from D-alanine: step 1/1. Oxidative deamination of D-amino acids. The chain is D-amino acid dehydrogenase from Xanthobacter autotrophicus (strain ATCC BAA-1158 / Py2).